The chain runs to 249 residues: tRNA (guanine-N(1)-)-methyltransferase (249 aa).

S-adenosyl-L-methionine-binding positions include Gly-116 and 136–141 (IGDYIL).

It belongs to the RNA methyltransferase TrmD family. As to quaternary structure, homodimer.

Its subcellular location is the cytoplasm. It catalyses the reaction guanosine(37) in tRNA + S-adenosyl-L-methionine = N(1)-methylguanosine(37) in tRNA + S-adenosyl-L-homocysteine + H(+). Its function is as follows. Specifically methylates guanosine-37 in various tRNAs. The polypeptide is tRNA (guanine-N(1)-)-methyltransferase (Zymomonas mobilis subsp. mobilis (strain ATCC 31821 / ZM4 / CP4)).